The following is a 346-amino-acid chain: Putative agmatine deiminase (346 aa).

The Amidino-cysteine intermediate role is filled by Cys338.

The protein belongs to the agmatine deiminase family.

It carries out the reaction agmatine + H2O = N-carbamoylputrescine + NH4(+). This chain is Putative agmatine deiminase, found in Streptomyces avermitilis (strain ATCC 31267 / DSM 46492 / JCM 5070 / NBRC 14893 / NCIMB 12804 / NRRL 8165 / MA-4680).